A 50-amino-acid chain; its full sequence is Penaeidin-1 (50 aa).

Intrachain disulfides connect Cys-25-Cys-38, Cys-27-Cys-45, and Cys-39-Cys-46.

Higher expression in hemocytes and to a lesser extent in heart, testis, gills, intestine, lymphoid organ and hepatopancreas. Traces in eyes and subcuticular epithelium. Not present in the brain.

It localises to the cytoplasmic granule. Its function is as follows. Antibacterial activity against M.luteus and E.coli bacteria. Antifungal activity against N.crassa and F.oxysporum. Presents chitin-binding activity. This is Penaeidin-1 from Penaeus vannamei (Whiteleg shrimp).